We begin with the raw amino-acid sequence, 677 residues long: Pannexin-2 (677 aa).

At M11–E47 the chain is on the cytoplasmic side. The helical transmembrane segment at L48–F70 threads the bilayer. Topologically, residues T71–F123 are extracellular. N-linked (GlcNAc...) asparagine glycosylation occurs at N86. A helical transmembrane segment spans residues L124–A146. The Cytoplasmic portion of the chain corresponds to S147–L226. A helical membrane pass occupies residues Y227 to Y249. The Extracellular portion of the chain corresponds to A250–G292. Residues V293 to F315 traverse the membrane as a helical segment. The Cytoplasmic segment spans residues R316–R643. 2 disordered regions span residues A393–V423 and N454–A510. The segment covering G492–A504 has biased composition (pro residues). S593 carries the phosphoserine modification.

Belongs to the pannexin family. In terms of assembly, homoheptameric. S-palmitoylated in neural stem and progenitor cells. Post-translationally, cleaved by CASP3 and CASP7 during apoptosis. Cleavage has no effect on it function.

The protein localises to the cell membrane. It localises to the golgi apparatus membrane. It is found in the endoplasmic reticulum membrane. It catalyses the reaction ATP(in) = ATP(out). It carries out the reaction chloride(in) = chloride(out). The catalysed reaction is iodide(out) = iodide(in). The enzyme catalyses Na(+)(in) = Na(+)(out). It catalyses the reaction D-gluconate(in) = D-gluconate(out). In terms of biological role, ion channel with a slight anion preference. Also able to release ATP. Plays a role in regulating neurogenesis and apoptosis in keratinocytes. This Homo sapiens (Human) protein is Pannexin-2.